Consider the following 245-residue polypeptide: Thiopurine S-methyltransferase (245 aa).

S-adenosyl-L-methionine is bound at residue tryptophan 29–phenylalanine 40. Phenylalanine 40 is a substrate binding site. Residue lysine 58 is modified to N6-acetyllysine. S-adenosyl-L-methionine contacts are provided by leucine 69, glutamate 90, and arginine 152.

It belongs to the class I-like SAM-binding methyltransferase superfamily. TPMT family. Monomer.

Its subcellular location is the cytoplasm. The enzyme catalyses S-adenosyl-L-methionine + a thiopurine = S-adenosyl-L-homocysteine + a thiopurine S-methylether.. The sequence is that of Thiopurine S-methyltransferase (TPMT) from Lycaon pictus (African wild dog).